The chain runs to 163 residues: NF-kappa-B inhibitor-interacting Ras-like protein 2 (163 aa).

The small GTPase-like stretch occupies residues 1–163 (MGKSCKVVIC…SANWNLHPDH (163 aa)). GTP is bound at residue 11–18 (GQHGVGKT). The Effector region signature appears at 35-43 (MIETQEDIY). Residues 61–65 (DTRGL) and 120–123 (NKSD) each bind GTP.

It belongs to the small GTPase superfamily. Ras family. KappaB-Ras subfamily.

It is found in the cytoplasm. In terms of biological role, atypical Ras-like protein that acts as a potent regulator of NF-kappa-B activity by preventing the degradation of NF-kappa-B inhibitor beta (NFKBIB) by most signals, explaining why NFKBIB is more resistant to degradation. The chain is NF-kappa-B inhibitor-interacting Ras-like protein 2 (nkiras2) from Xenopus laevis (African clawed frog).